Consider the following 488-residue polypeptide: Probable indole-3-acetic acid-amido synthetase GH3.6 (488 aa).

Belongs to the IAA-amido conjugating enzyme family. As to expression, expressed in roots and callus.

Its function is as follows. May catalyze the synthesis of indole-3-acetic acid (IAA)-amino acid conjugates, providing a mechanism for the plant to cope with the presence of excess auxin. The polypeptide is Probable indole-3-acetic acid-amido synthetase GH3.6 (GH3.6) (Oryza sativa subsp. japonica (Rice)).